The following is a 341-amino-acid chain: MKALSKLKAEKGIWLVDAPKPVMGHNDLLIKIKKTAICGTDMHIYNWDEWSQKTIPVPMVVGHEYVGEVVDIGQEVRGFKIGDRVSGEGHITCGHCRNCRAGRTHLCRNTSGVGVNREGSFAEYLVIPAFNAFKIPDDISDDLASIFDPFGNAVHTALSFDLVGEDVLITGAGPIGIMAAAVCRHVGARHVVITDVNEYRLELARKMGATRAVNVSKENLKDVMKELGMTEGFDVGLEMSGVPSAFHAMLDTMNHGGKVAMLGIPSGEMAIDWSKVIFKGLVIKGIYGREMFETWYKMASLIQSGLDISPIITHHFKIDDFQQGFDAMGSGQSGKVILSWD.

C38 serves as a coordination point for Zn(2+). Active-site charge relay system residues include T40 and H43. Residues H63, E64, C93, C96, C99, and C107 each coordinate Zn(2+). NAD(+) is bound by residues I175, D195, R200, 262-264 (LGI), and 286-287 (IY).

This sequence belongs to the zinc-containing alcohol dehydrogenase family. In terms of assembly, homotetramer. It depends on Zn(2+) as a cofactor.

The protein resides in the cytoplasm. The catalysed reaction is L-threonine + NAD(+) = (2S)-2-amino-3-oxobutanoate + NADH + H(+). The protein operates within amino-acid degradation; L-threonine degradation via oxydo-reductase pathway; glycine from L-threonine: step 1/2. Its function is as follows. Catalyzes the NAD(+)-dependent oxidation of L-threonine to 2-amino-3-ketobutyrate. The polypeptide is L-threonine 3-dehydrogenase (Shewanella baltica (strain OS185)).